A 253-amino-acid polypeptide reads, in one-letter code: Ribosomal RNA small subunit methyltransferase A (253 aa).

S-adenosyl-L-methionine-binding residues include H12, L14, G39, E60, D81, and N104.

It belongs to the class I-like SAM-binding methyltransferase superfamily. rRNA adenine N(6)-methyltransferase family. RsmA subfamily.

It localises to the cytoplasm. The catalysed reaction is adenosine(1518)/adenosine(1519) in 16S rRNA + 4 S-adenosyl-L-methionine = N(6)-dimethyladenosine(1518)/N(6)-dimethyladenosine(1519) in 16S rRNA + 4 S-adenosyl-L-homocysteine + 4 H(+). Its function is as follows. Specifically dimethylates two adjacent adenosines (A1518 and A1519) in the loop of a conserved hairpin near the 3'-end of 16S rRNA in the 30S particle. May play a critical role in biogenesis of 30S subunits. This is Ribosomal RNA small subunit methyltransferase A from Paracidovorax citrulli (strain AAC00-1) (Acidovorax citrulli).